We begin with the raw amino-acid sequence, 127 residues long: Large ribosomal subunit protein bL12 (127 aa).

It belongs to the bacterial ribosomal protein bL12 family. In terms of assembly, homodimer. Part of the ribosomal stalk of the 50S ribosomal subunit. Forms a multimeric L10(L12)X complex, where L10 forms an elongated spine to which 2 to 4 L12 dimers bind in a sequential fashion. Binds GTP-bound translation factors.

Functionally, forms part of the ribosomal stalk which helps the ribosome interact with GTP-bound translation factors. Is thus essential for accurate translation. The polypeptide is Large ribosomal subunit protein bL12 (Pelobacter propionicus (strain DSM 2379 / NBRC 103807 / OttBd1)).